The following is a 100-amino-acid chain: Integration host factor subunit alpha (100 aa).

This sequence belongs to the bacterial histone-like protein family. Heterodimer of an alpha and a beta chain.

Functionally, this protein is one of the two subunits of integration host factor, a specific DNA-binding protein that functions in genetic recombination as well as in transcriptional and translational control. The protein is Integration host factor subunit alpha of Ruegeria sp. (strain TM1040) (Silicibacter sp.).